The primary structure comprises 153 residues: Large-conductance mechanosensitive channel (153 aa).

2 helical membrane passes run 16-36 (VIDL…VKSL) and 88-108 (GLFI…FMLV).

This sequence belongs to the MscL family. Homopentamer.

Its subcellular location is the cell inner membrane. Functionally, channel that opens in response to stretch forces in the membrane lipid bilayer. May participate in the regulation of osmotic pressure changes within the cell. The protein is Large-conductance mechanosensitive channel of Chromobacterium violaceum (strain ATCC 12472 / DSM 30191 / JCM 1249 / CCUG 213 / NBRC 12614 / NCIMB 9131 / NCTC 9757 / MK).